A 239-amino-acid chain; its full sequence is Large ribosomal subunit protein uL30 (239 aa).

The interval 1-22 is disordered; that stretch reads MEGVMSEAPQSSIRKKEYEARM.

This sequence belongs to the universal ribosomal protein uL30 family.

This is Large ribosomal subunit protein uL30 (RPL7) from Encephalitozoon cuniculi (strain GB-M1) (Microsporidian parasite).